We begin with the raw amino-acid sequence, 421 residues long: MDLENKVKKMGLGHEQGFGAPCLKCKEKCEGFELHFWRKICRNCKCGQEEHDVLLSNEEDRKVGKLFEDTKYTTLIAKLKSDGIPMYKRNVMILTNPVAAKKNVSINTVTYEWAPPVHNQALARQYMQMLPKEKQPVAGSEGAQYRKKQLAKQLPAHDQDPSKCHELSPREVKEMEQFVKKYKSEALGVGDVKLPCEMDAQGPKQIYIPGGDRSTPPAVGAMEDKSAEHKSTQYSCYCCKLSMKEGDPAIYAERAGYDKLWHPACFVCSICHELLVDMIYFWKNEKLYCGRHYCDSEKPRCAGCDELIFSNEYTQAENQNWHLKHFCCFDCDSILAGEIYVMVSDKPVCKPCYVKNHAVVCQGCHNAIDPEVQRVTYNNFSWHASTECFLCSCCSKCLIGQKFMPVEGMVFCSVECKKMMS.

The PET domain occupies 92 to 199 (MILTNPVAAK…GDVKLPCEMD (108 aa)). A disordered region spans residues 133-164 (EKQPVAGSEGAQYRKKQLAKQLPAHDQDPSKC). The segment covering 155–164 (PAHDQDPSKC) has biased composition (basic and acidic residues). LIM zinc-binding domains are found at residues 234 to 297 (YSCY…CDSE), 299 to 359 (PRCA…NHAV), and 362 to 421 (QGCH…KMMS).

The protein belongs to the prickle / espinas / testin family. As to quaternary structure, interacts via LIM domain 1 with ZYX. Interacts (via LIM domain 3) with ENAH and VASP. Interacts with ALKBH4, talin, actin, alpha-actinin, GRIP1 and PXN. Interacts (via LIM domain 2) with ACTL7A (via N-terminus). Heterodimer with ACTL7A; the heterodimer interacts with ENAH to form a heterotrimer.

The protein resides in the cytoplasm. It is found in the cell junction. Its subcellular location is the focal adhesion. Functionally, scaffold protein that may play a role in cell adhesion, cell spreading and in the reorganization of the actin cytoskeleton. Plays a role in the regulation of cell proliferation. May act as a tumor suppressor. The sequence is that of Testin (TES) from Ateles geoffroyi (Black-handed spider monkey).